Consider the following 140-residue polypeptide: PDZ domain-containing protein 11 (140 aa).

The PDZ domain maps to 47–129 (IVTLKKPPGA…ISMRVRFFPY (83 aa)).

Interacts with ATP2B1, ATP2B2, ATP2B3, ATP2B4 and ATP7A. Interacts with PLEKHA7 (via WW domains) at zonula adherens; this interaction is essential for the interaction between PLEKHA7 and the ADAM10-binding protein TSPAN33. Interacts with SLC5A6.

The protein resides in the cytoplasm. It is found in the cell junction. It localises to the adherens junction. Its subcellular location is the cell membrane. In terms of biological role, mediates docking of ADAM10 to zonula adherens by interacting with PLEKHA7 which is required for PLEKHA7 to interact with the ADAM10-binding protein TSPAN33. In Bos taurus (Bovine), this protein is PDZ domain-containing protein 11 (PDZD11).